Consider the following 277-residue polypeptide: Xyloglucan endotransglucosylase/hydrolase protein 19 (277 aa).

An N-terminal signal peptide occupies residues Met1–Ala21. Residues Gly22–Tyr213 form the GH16 domain. Catalysis depends on Glu99, which acts as the Nucleophile. The active-site Proton donor is Glu103. A xyloglucan-binding site is contributed by Glu103. Asn107 is a glycosylation site (N-linked (GlcNAc...) asparagine). Residues His116–Asn118, Asp126–Glu128, His192–Trp193, and Gly197 contribute to the xyloglucan site. Intrachain disulfides connect Cys221–Cys230 and Cys262–Cys276. Arg267 serves as a coordination point for xyloglucan.

The protein belongs to the glycosyl hydrolase 16 family. XTH group 2 subfamily. Contains at least one intrachain disulfide bond essential for its enzymatic activity. Root specific.

The protein localises to the secreted. It is found in the cell wall. The protein resides in the extracellular space. It localises to the apoplast. The enzyme catalyses breaks a beta-(1-&gt;4) bond in the backbone of a xyloglucan and transfers the xyloglucanyl segment on to O-4 of the non-reducing terminal glucose residue of an acceptor, which can be a xyloglucan or an oligosaccharide of xyloglucan.. In terms of biological role, possesses xyloglucan endotransglucosylase (XET) activity in vitro. Does not possess xyloglucan endohydrolysis (XEH) activity. Cleaves and religates xyloglucan polymers, an essential constituent of the primary cell wall, and thereby participates in cell wall construction of growing tissues. Involved in cell proliferation in the tissue reunion process of wounded inflorescence stems. Maybe a downstream target of NAC071 as a consequence of auxin action in wounded stems. The polypeptide is Xyloglucan endotransglucosylase/hydrolase protein 19 (Arabidopsis thaliana (Mouse-ear cress)).